We begin with the raw amino-acid sequence, 140 residues long: 3-hydroxyacyl-[acyl-carrier-protein] dehydratase FabZ (140 aa).

The active site involves His-48.

This sequence belongs to the thioester dehydratase family. FabZ subfamily.

It localises to the cytoplasm. The catalysed reaction is a (3R)-hydroxyacyl-[ACP] = a (2E)-enoyl-[ACP] + H2O. Functionally, involved in unsaturated fatty acids biosynthesis. Catalyzes the dehydration of short chain beta-hydroxyacyl-ACPs and long chain saturated and unsaturated beta-hydroxyacyl-ACPs. The sequence is that of 3-hydroxyacyl-[acyl-carrier-protein] dehydratase FabZ from Exiguobacterium sibiricum (strain DSM 17290 / CCUG 55495 / CIP 109462 / JCM 13490 / 255-15).